A 214-amino-acid polypeptide reads, in one-letter code: Ceramide-1-phosphate transfer protein (214 aa).

Residues Asp56, Lys60, Arg106, Arg110, and His150 each coordinate an N-acylsphingoid base 1-phosphate.

Belongs to the GLTP family.

It localises to the cytoplasm. The protein resides in the cytosol. The protein localises to the golgi apparatus. Its subcellular location is the trans-Golgi network membrane. It is found in the cell membrane. It localises to the endosome membrane. The protein resides in the nucleus outer membrane. The enzyme catalyses N-(hexadecanoyl)-sphing-4-enine-1-phosphate(in) = N-(hexadecanoyl)-sphing-4-enine-1-phosphate(out). It carries out the reaction N-(9Z-octadecenoyl)-sphing-4-enine-1-phosphate(in) = N-(9Z-octadecenoyl)-sphing-4-enine-1-phosphate(out). In terms of biological role, mediates the intracellular transfer of ceramide-1-phosphate (C1P) between organelle membranes and the cell membrane. Required for normal structure of the Golgi stacks. Can bind phosphoceramides with a variety of aliphatic chains, but has a preference for lipids with saturated C16:0 or monounsaturated C18:1 aliphatic chains, and is inefficient with phosphoceramides containing lignoceryl (C24:0). Plays a role in the regulation of the cellular levels of ceramide-1-phosphate, and thereby contributes to the regulation of phospholipase PLA2G4A activity and the release of arachidonic acid. Has no activity with galactosylceramide, lactosylceramide, sphingomyelin, phosphatidylcholine, phosphatidic acid and ceramide. C1P transfer is stimulated by phosphatidylserine in C1P source vesicles. Regulates autophagy, inflammasome mediated IL1B and IL18 processing, and pyroptosis, but not apoptosis. This chain is Ceramide-1-phosphate transfer protein (CPTP), found in Bos taurus (Bovine).